The sequence spans 630 residues: Heat shock cognate 70 kDa protein 3 (630 aa).

Residues Phe611–Asp630 are disordered. A compositionally biased stretch (low complexity) spans Asn615–Asp630.

The protein belongs to the heat shock protein 70 family.

In terms of biological role, may function in protein folding and assembly, and disassembly of protein complexes. This chain is Heat shock cognate 70 kDa protein 3, found in Dictyostelium discoideum (Social amoeba).